A 1383-amino-acid chain; its full sequence is DNA-directed RNA polymerase subunit beta (1383 aa).

It belongs to the RNA polymerase beta chain family. As to quaternary structure, the RNAP catalytic core consists of 2 alpha, 1 beta, 1 beta' and 1 omega subunit. When a sigma factor is associated with the core the holoenzyme is formed, which can initiate transcription.

The catalysed reaction is RNA(n) + a ribonucleoside 5'-triphosphate = RNA(n+1) + diphosphate. Functionally, DNA-dependent RNA polymerase catalyzes the transcription of DNA into RNA using the four ribonucleoside triphosphates as substrates. This chain is DNA-directed RNA polymerase subunit beta, found in Bartonella bacilliformis (strain ATCC 35685 / KC583 / Herrer 020/F12,63).